The following is a 124-amino-acid chain: Small ribosomal subunit protein uS12 (124 aa).

Asp89 carries the post-translational modification 3-methylthioaspartic acid. Residues 105 to 124 (QGVKNRKQARSRYGAKKEKS) form a disordered region. The segment covering 108–118 (KNRKQARSRYG) has biased composition (basic residues).

It belongs to the universal ribosomal protein uS12 family. In terms of assembly, part of the 30S ribosomal subunit. Contacts proteins S8 and S17. May interact with IF1 in the 30S initiation complex.

Functionally, with S4 and S5 plays an important role in translational accuracy. In terms of biological role, interacts with and stabilizes bases of the 16S rRNA that are involved in tRNA selection in the A site and with the mRNA backbone. Located at the interface of the 30S and 50S subunits, it traverses the body of the 30S subunit contacting proteins on the other side and probably holding the rRNA structure together. The combined cluster of proteins S8, S12 and S17 appears to hold together the shoulder and platform of the 30S subunit. The protein is Small ribosomal subunit protein uS12 (rpsL) of Mycolicibacterium smegmatis (strain ATCC 700084 / mc(2)155) (Mycobacterium smegmatis).